Here is a 128-residue protein sequence, read N- to C-terminus: Large ribosomal subunit protein uL22 (128 aa).

The protein belongs to the universal ribosomal protein uL22 family. As to quaternary structure, part of the 50S ribosomal subunit.

In terms of biological role, this protein binds specifically to 23S rRNA; its binding is stimulated by other ribosomal proteins, e.g. L4, L17, and L20. It is important during the early stages of 50S assembly. It makes multiple contacts with different domains of the 23S rRNA in the assembled 50S subunit and ribosome. Functionally, the globular domain of the protein is located near the polypeptide exit tunnel on the outside of the subunit, while an extended beta-hairpin is found that lines the wall of the exit tunnel in the center of the 70S ribosome. The protein is Large ribosomal subunit protein uL22 of Prochlorococcus marinus (strain AS9601).